A 338-amino-acid polypeptide reads, in one-letter code: MFEMKNSTRYILSLLLSIIMGVAVMGSTFAISTTYGTGHTTATVDNLKPVVNCSSYEMVIRTVQGIKVYEYKNTTGVTPGLLRSDALEAYAYTGEGVTFYVNVSDPNGEQDLQTNGAGVDFLLVPQGQSPSNPTYVIHAGFDTSTSGDADLTTLTFYAQWTVPAGAYGCFDVYVKATDKHGACTGYIKKGKIFLNPMIGINVTKDNDAYPAPFTGLSFGNVNPGDTNVPATENVVTIHNIDPDGVGTKIAVFVSATSMTQAGGTGIIPAENIKAHVIKANNMTQSYNTHLQNNVKVLLWQPLKPCHTNALEVNFTLDVPTPLPSGCYGGSITFYGLGL.

3 helical membrane-spanning segments follow: residues 11–31, 249–269, and 318–338; these read ILSL…TFAI, IAVF…IIPA, and VPTP…GLGL.

The protein resides in the cell membrane. This is an uncharacterized protein from Methanocaldococcus jannaschii (strain ATCC 43067 / DSM 2661 / JAL-1 / JCM 10045 / NBRC 100440) (Methanococcus jannaschii).